Here is a 366-residue protein sequence, read N- to C-terminus: uncharacterized protein (366 aa).

This is an uncharacterized protein from Methanocaldococcus jannaschii (strain ATCC 43067 / DSM 2661 / JAL-1 / JCM 10045 / NBRC 100440) (Methanococcus jannaschii).